The primary structure comprises 692 residues: Elongation factor G (692 aa).

Positions 8-282 (ENTRNIGIMA…AVIDYLPSPL (275 aa)) constitute a tr-type G domain. GTP-binding positions include 17 to 24 (AHIDAGKT), 81 to 85 (DTPGH), and 135 to 138 (NKMD).

The protein belongs to the TRAFAC class translation factor GTPase superfamily. Classic translation factor GTPase family. EF-G/EF-2 subfamily.

It is found in the cytoplasm. In terms of biological role, catalyzes the GTP-dependent ribosomal translocation step during translation elongation. During this step, the ribosome changes from the pre-translocational (PRE) to the post-translocational (POST) state as the newly formed A-site-bound peptidyl-tRNA and P-site-bound deacylated tRNA move to the P and E sites, respectively. Catalyzes the coordinated movement of the two tRNA molecules, the mRNA and conformational changes in the ribosome. The protein is Elongation factor G of Bacillus cereus (strain Q1).